Reading from the N-terminus, the 241-residue chain is Orotidine 5'-phosphate decarboxylase (241 aa).

Substrate contacts are provided by residues D15, K36, 63–72 (DLKFHDIPNT), T127, R189, Q198, G218, and R219. K65 acts as the Proton donor in catalysis.

It belongs to the OMP decarboxylase family. Type 1 subfamily. Homodimer.

It catalyses the reaction orotidine 5'-phosphate + H(+) = UMP + CO2. It functions in the pathway pyrimidine metabolism; UMP biosynthesis via de novo pathway; UMP from orotate: step 2/2. Functionally, catalyzes the decarboxylation of orotidine 5'-monophosphate (OMP) to uridine 5'-monophosphate (UMP). The sequence is that of Orotidine 5'-phosphate decarboxylase from Prochlorococcus marinus (strain MIT 9211).